The chain runs to 575 residues: MSEMLKGIAASDGVAVAKAYLLVQPDLSFNKTSVEDTDAEATRLDDALAKSTEELQAIRDKAAQSLGEAEAQVFDAHLMVLSDPEMVGQIKQNIQDNKVNAEAALKEVTDMYIGMFEAMDDNAYMQERAADIRDVAKRILAHLLGVTLPNPSMINEEVIVVAHDLTPSDTAQLDRTYVKAFVTDIGGRTSHSAIMARSLEIPAIVGTKEITDKVKAGDILAVNGIIGDVIIDPTDAEKSEFEAEAKAYADQKAEWDKLKNAETVTADGKHVELAANIGTPKDLEGVHKNGGEAVGLYRTEFLYMDSSDFPTEEDQYQAYKAVLEGMEGKPVVVRTMDIGGDKELPYLTLPHEMNPFLGYRALRISLSELGDGMFRTQMRALLRASVHGNLRIMFPMVATLKEFRAAKAIFEDEKQKLVNEGVEVSNDIQVGIMIEIPAAAVLADKFAKEVDFFSVGTNDLIQYTMAADRMNERVSYLYQPYNPSILRLIKNVIDAAHAEGKWAGMCGEMAGDQTAVPLLLGMGLDEFSMSATSILKTRSLMKRLDTTKMAELADRALKECDTMEEVFALVEEYTK.

Histidine 191 acts as the Tele-phosphohistidine intermediate in catalysis. Phosphoenolpyruvate contacts are provided by arginine 298 and arginine 334. Residues glutamate 435 and aspartate 459 each contribute to the Mg(2+) site. Phosphoenolpyruvate-binding positions include 458–459 and arginine 469; that span reads ND. The active-site Proton donor is cysteine 506.

This sequence belongs to the PEP-utilizing enzyme family. Homodimer. Requires Mg(2+) as cofactor.

The protein localises to the cytoplasm. The catalysed reaction is L-histidyl-[protein] + phosphoenolpyruvate = N(pros)-phospho-L-histidyl-[protein] + pyruvate. General (non sugar-specific) component of the phosphoenolpyruvate-dependent sugar phosphotransferase system (sugar PTS). This major carbohydrate active-transport system catalyzes the phosphorylation of incoming sugar substrates concomitantly with their translocation across the cell membrane. Enzyme I transfers the phosphoryl group from phosphoenolpyruvate (PEP) to the phosphoryl carrier protein (HPr). The protein is Phosphoenolpyruvate-protein phosphotransferase (ptsI) of Enterococcus faecalis (strain ATCC 700802 / V583).